Reading from the N-terminus, the 23-residue chain is SHLFQPSLVLDMAKVLLDNYXFP.

It localises to the secreted. Its subcellular location is the extracellular space. The protein resides in the extracellular matrix. It is found in the interphotoreceptor matrix. Functionally, IRBP shuttles 11-cis and all trans retinoids between the retinol isomerase in the pigment epithelium and the visual pigments in the photoreceptor cells of the retina. This is Retinol-binding protein 3 (RBP3) from Oryctolagus cuniculus (Rabbit).